A 196-amino-acid polypeptide reads, in one-letter code: Molybdenum cofactor guanylyltransferase (196 aa).

GTP-binding positions include 10-12, Lys-23, Asn-51, Asp-69, and Asp-99; that span reads LAG. Mg(2+) is bound at residue Asp-99.

It belongs to the MobA family. As to quaternary structure, monomer. The cofactor is Mg(2+).

The protein localises to the cytoplasm. The catalysed reaction is Mo-molybdopterin + GTP + H(+) = Mo-molybdopterin guanine dinucleotide + diphosphate. Functionally, transfers a GMP moiety from GTP to Mo-molybdopterin (Mo-MPT) cofactor (Moco or molybdenum cofactor) to form Mo-molybdopterin guanine dinucleotide (Mo-MGD) cofactor. The polypeptide is Molybdenum cofactor guanylyltransferase (Shewanella loihica (strain ATCC BAA-1088 / PV-4)).